Here is a 2390-residue protein sequence, read N- to C-terminus: Spectrin beta chain, non-erythrocytic 2 (2390 aa).

At Ser-2 the chain carries N-acetylserine. The interval 2 to 278 (SSTLSPTDFD…IITYVATYYH (277 aa)) is actin-binding. Ser-6 and Ser-31 each carry phosphoserine. Calponin-homology (CH) domains lie at 57–161 (AVQK…LRFQ) and 176–281 (KSAK…HYFS). 6 Spectrin repeats span residues 306-414 (LVEK…LALR), 427-527 (AARF…RERL), 532-639 (ELQK…RLEE), 642-744 (RLWR…QRLA), 749-849 (LYQF…RALE), and 855-954 (YTML…KAAL). A Phosphoserine modification is found at Ser-959. Spectrin repeat units lie at residues 960–1063 (IQNY…SLGE), 1066–1169 (RLQD…GRLA), 1174–1262 (FQGF…RHKK), 1279–1379 (EQQH…ARSL), 1384–1485 (RAEL…RRLQ), 1489–1586 (EQHQ…RLED), 1589–1692 (RAQQ…RLQE), 1696–1797 (LCQL…GQVL), 1801–1904 (YELQ…QLLL), 1910–2010 (FRFF…DWLQ), and 2017–2076 (VFGR…EKLT). Residue Ser-1073 is modified to Phosphoserine. Over residues 2081 to 2096 (REKERKRKREEEERRK) the composition is skewed to basic and acidic residues. Disordered stretches follow at residues 2081-2222 (REKE…EQME) and 2331-2390 (SSAS…KKNK). Residues 2116-2125 (QTASDTTWDG) show a composition bias toward polar residues. Phosphoserine occurs at positions 2171 and 2199. The PH domain occupies 2218-2328 (QEQMEGMLCR…WLRVVNAAIA (111 aa)). Thr-2354 bears the Phosphothreonine mark. Position 2359 is a phosphoserine (Ser-2359). Over residues 2370 to 2383 (RSKDGREREREKRF) the composition is skewed to basic and acidic residues.

Belongs to the spectrin family. As to expression, highly expressed in brain, kidney, pancreas, and liver, and at lower levels in lung and placenta.

It is found in the cytoplasm. The protein resides in the cytoskeleton. Its subcellular location is the cell cortex. Its function is as follows. Probably plays an important role in neuronal membrane skeleton. The polypeptide is Spectrin beta chain, non-erythrocytic 2 (SPTBN2) (Homo sapiens (Human)).